Consider the following 298-residue polypeptide: Multifunctional dioxygenase ausE (298 aa).

Arg72 and Gln127 together coordinate substrate. Fe cation-binding residues include His130 and Asp132. Thr167 contributes to the substrate binding site. Position 214 (His214) interacts with Fe cation. Residue Arg226 coordinates substrate.

This sequence belongs to the PhyH family. Homodimer. It depends on Fe cation as a cofactor.

It carries out the reaction preaustinoid A1 + 2-oxoglutarate + O2 = preaustinoid A2 + succinate + CO2 + H2O. It catalyses the reaction preaustinoid A2 + 2-oxoglutarate + O2 = preaustinoid A3 + succinate + CO2 + H2O. The catalysed reaction is berkeleyone A + 2-oxoglutarate + O2 = preaustinoid A + succinate + CO2 + H2O. It participates in secondary metabolite biosynthesis; terpenoid biosynthesis. Functionally, multifunctional dioxygenase; part of the gene cluster B that mediates the biosynthesis of austinol and dehydroaustinol, two fungal meroterpenoids. The first step of the pathway is the synthesis of 3,5-dimethylorsellinic acid by the polyketide synthase ausA. 3,5-dimethylorsellinic acid is then prenylated by the polyprenyl transferase ausN. Further epoxidation by the FAD-dependent monooxygenase ausM and cyclization by the probable terpene cyclase ausL lead to the formation of protoaustinoid A. Protoaustinoid A is then oxidized to spiro-lactone preaustinoid A3 by the combined action of the FAD-binding monooxygenases ausB and ausC, and the dioxygenase ausE. Acid-catalyzed keto-rearrangement and ring contraction of the tetraketide portion of preaustinoid A3 by ausJ lead to the formation of preaustinoid A4. The aldo-keto reductase ausK, with the help of ausH, is involved in the next step by transforming preaustinoid A4 into isoaustinone which is in turn hydroxylated by the P450 monooxygenase ausI to form austinolide. Finally, the cytochrome P450 monooxygenase ausG modifies austinolide to austinol. Austinol can be further modified to dehydroaustinol which forms a diffusible complex with diorcinol that initiates conidiation. Due to genetic rearrangements of the clusters and the subsequent loss of some enzymes, the end products of the Emericella nidulans austinoid biosynthesis clusters are austinol and dehydroaustinol, even if additional enzymes, such as the O-acetyltransferase ausQ and the cytochrome P450 monooxygenase ausR are still functional. This is Multifunctional dioxygenase ausE from Emericella nidulans (strain FGSC A4 / ATCC 38163 / CBS 112.46 / NRRL 194 / M139) (Aspergillus nidulans).